The primary structure comprises 202 residues: Transcription factor MUTE (202 aa).

Residues 1–49 enclose the bHLH domain; that stretch reads MSHIAVERNRRRQMNEHLKSLRSLTPCFYIKRGDQASIIGGVIEFIKEL.

Homodimer. In terms of tissue distribution, leaf epidermis and flowers.

Its subcellular location is the nucleus. Transcription factor. Together with FMA and SPCH, regulates the stomata formation. Required for the differentiation of stomatal guard cells, by promoting successive asymmetric cell divisions and the formation of guard mother cells. Promotes the conversion of the leaf epidermis into stomata. This is Transcription factor MUTE (MUTE) from Arabidopsis thaliana (Mouse-ear cress).